Reading from the N-terminus, the 1209-residue chain is Protein phosphatase 1 regulatory subunit 26 (1209 aa).

9 disordered regions span residues 57–91, 145–279, 291–471, 501–532, 555–694, 733–836, 848–1033, 1052–1072, and 1118–1209; these read DGAA…TVHK, SGAA…HRQG, KPPR…VERS, GSDG…DSDD, GESC…EDLD, EQLG…SNDS, KAKE…FAHQ, RGGV…GLPS, and AFRE…VVKV. Positions 63–91 are enriched in basic and acidic residues; the sequence is TSDERAAQRGHRAEGCHDARPAAKPTVHK. Residues 201-219 show a composition bias toward low complexity; it reads QVGSSKDQGSASPVSVSSD. Residues 226–255 show a composition bias toward basic and acidic residues; that stretch reads IRAEIEQFLNEKRQHETQKCDGSVEKKPDT. Residues 301–321 show a composition bias toward polar residues; the sequence is QPRSLRSKVTTTQENEGSTKP. Positions 352–362 are enriched in low complexity; it reads SAAQASEASDS. The segment covering 442–454 has biased composition (basic and acidic residues); the sequence is DTDHAPKLLKETK. Basic and acidic residues-rich tracts occupy residues 609 to 637, 667 to 685, and 757 to 766; these read KMQE…RRDL, KTDE…DKSS, and SKRDSGEGPG. Composition is skewed to low complexity over residues 821-836 and 852-861; these read PGSL…SNDS and SVSSSEVQAE. S1161 is modified (phosphoserine). The segment covering 1187–1209 has biased composition (low complexity); that stretch reads GSDASDFSDTSTEDSGGSSVVKV.

Interacts with UTP20 and PPP1CA. Ubiquitous in normal tissues. Expressed in numerous adenocarcinoma cell lines.

It localises to the nucleus. The protein localises to the nucleolus. Its function is as follows. Inhibits phosphatase activity of protein phosphatase 1 (PP1) complexes. May positively regulate cell proliferation. The protein is Protein phosphatase 1 regulatory subunit 26 (PPP1R26) of Homo sapiens (Human).